The chain runs to 302 residues: MGHKAGFVALVGRTNVGKSTLLNAILQEKIAITSPKPQTTRNTIRGILTTDEYQVIFVDTPGIHKPKSKLSEFMIEVAKRTLKEVDLILYMIEPDTEVGPGDRYIIEHLKEVDTPVILVVNKIDLVPEKRVEETIKIFKEQYEFKDVVAISAIENKNIDLLKEKIVSLLPEGPKYYLDDYITDQPEKLIVAEIIREKMLHFLEEEVPHGVYVEVESIKEREDKDIIDIEAYIYCEKESHKGIIIGKNGQMLKKIGQSARLDLEEFYGKQVFLDLWVKTRKGWRDNTTLLKKLGYAIDKKTYE.

The 168-residue stretch at 4 to 171 folds into the Era-type G domain; that stretch reads KAGFVALVGR…KEKIVSLLPE (168 aa). Residues 12–19 form a G1 region; it reads GRTNVGKS. 12 to 19 contributes to the GTP binding site; that stretch reads GRTNVGKS. Residues 38 to 42 are G2; it reads QTTRN. The G3 stretch occupies residues 59–62; the sequence is DTPG. GTP-binding positions include 59 to 63 and 121 to 124; these read DTPGI and NKID. Residues 121–124 form a G4 region; the sequence is NKID. A G5 region spans residues 150 to 152; it reads ISA. Positions 202–280 constitute a KH type-2 domain; it reads LEEEVPHGVY…FLDLWVKTRK (79 aa).

Belongs to the TRAFAC class TrmE-Era-EngA-EngB-Septin-like GTPase superfamily. Era GTPase family. In terms of assembly, monomer.

The protein resides in the cytoplasm. It localises to the cell membrane. In terms of biological role, an essential GTPase that binds both GDP and GTP, with rapid nucleotide exchange. Plays a role in 16S rRNA processing and 30S ribosomal subunit biogenesis and possibly also in cell cycle regulation and energy metabolism. This Thermoanaerobacter pseudethanolicus (strain ATCC 33223 / 39E) (Clostridium thermohydrosulfuricum) protein is GTPase Era.